The following is a 371-amino-acid chain: Dual-specificity RNA methyltransferase RlmN (371 aa).

Catalysis depends on E99, which acts as the Proton acceptor. The region spanning 106 to 333 (DDNRATLCIS…AIRRASKGQD (228 aa)) is the Radical SAM core domain. Cysteines 113 and 338 form a disulfide. [4Fe-4S] cluster is bound by residues C120, C124, and C127. Residues 165–166 (GE), S197, 219–221 (SLN), and N295 contribute to the S-adenosyl-L-methionine site. Catalysis depends on C338, which acts as the S-methylcysteine intermediate. Positions 345–371 (LTVSPPAQESERNSARPDRSQGKGKHL) are disordered. The span at 353–365 (ESERNSARPDRSQ) shows a compositional bias: basic and acidic residues.

It belongs to the radical SAM superfamily. RlmN family. [4Fe-4S] cluster is required as a cofactor.

It localises to the cytoplasm. It catalyses the reaction adenosine(2503) in 23S rRNA + 2 reduced [2Fe-2S]-[ferredoxin] + 2 S-adenosyl-L-methionine = 2-methyladenosine(2503) in 23S rRNA + 5'-deoxyadenosine + L-methionine + 2 oxidized [2Fe-2S]-[ferredoxin] + S-adenosyl-L-homocysteine. The enzyme catalyses adenosine(37) in tRNA + 2 reduced [2Fe-2S]-[ferredoxin] + 2 S-adenosyl-L-methionine = 2-methyladenosine(37) in tRNA + 5'-deoxyadenosine + L-methionine + 2 oxidized [2Fe-2S]-[ferredoxin] + S-adenosyl-L-homocysteine. Specifically methylates position 2 of adenine 2503 in 23S rRNA and position 2 of adenine 37 in tRNAs. m2A2503 modification seems to play a crucial role in the proofreading step occurring at the peptidyl transferase center and thus would serve to optimize ribosomal fidelity. The protein is Dual-specificity RNA methyltransferase RlmN of Syntrophotalea carbinolica (strain DSM 2380 / NBRC 103641 / GraBd1) (Pelobacter carbinolicus).